Consider the following 165-residue polypeptide: Nascent polypeptide-associated complex subunit beta (165 aa).

2 disordered regions span residues 1–34 (MDQAKLARMQASVRIGGKGTPRRKVKKVHKTSGA) and 133–165 (QNMQKNQAGEKKDDDEDDIPDLVEGENFEKSVD). A compositionally biased stretch (basic residues) spans 20-30 (TPRRKVKKVHK). The region spanning 33–110 (GADDKKLQAT…GEEKELTELV (78 aa)) is the NAC-A/B domain. The span at 145–158 (DDDEDDIPDLVEGE) shows a compositional bias: acidic residues.

It belongs to the NAC-beta family. Part of the nascent polypeptide-associated complex (NAC), consisting of egd2 and egd1. NAC associates with ribosomes via egd1.

The protein resides in the cytoplasm. It is found in the nucleus. Component of the nascent polypeptide-associated complex (NAC), a dynamic component of the ribosomal exit tunnel, protecting the emerging polypeptides from interaction with other cytoplasmic proteins to ensure appropriate nascent protein targeting. The NAC complex also promotes mitochondrial protein import by enhancing productive ribosome interactions with the outer mitochondrial membrane and blocks the inappropriate interaction of ribosomes translating non-secretory nascent polypeptides with translocation sites in the membrane of the endoplasmic reticulum. EGD1 may act as a transcription factor that exert a negative effect on the expression of several genes that are transcribed by RNA polymerase II. The protein is Nascent polypeptide-associated complex subunit beta (egd1) of Emericella nidulans (strain FGSC A4 / ATCC 38163 / CBS 112.46 / NRRL 194 / M139) (Aspergillus nidulans).